The chain runs to 221 residues: UPF0502 protein PLES_16071 (221 aa).

It belongs to the UPF0502 family.

The protein is UPF0502 protein PLES_16071 of Pseudomonas aeruginosa (strain LESB58).